The chain runs to 404 residues: Cysteine desulfurase IscS (404 aa).

Pyridoxal 5'-phosphate-binding positions include 75-76 (AT), Asn-155, Gln-183, and 203-205 (SSH). Lys-206 bears the N6-(pyridoxal phosphate)lysine mark. Position 243 (Thr-243) interacts with pyridoxal 5'-phosphate. The active-site Cysteine persulfide intermediate is Cys-328. A [2Fe-2S] cluster-binding site is contributed by Cys-328.

Belongs to the class-V pyridoxal-phosphate-dependent aminotransferase family. NifS/IscS subfamily. Homodimer. Forms a heterotetramer with IscU, interacts with other sulfur acceptors. It depends on pyridoxal 5'-phosphate as a cofactor.

Its subcellular location is the cytoplasm. The catalysed reaction is (sulfur carrier)-H + L-cysteine = (sulfur carrier)-SH + L-alanine. It functions in the pathway cofactor biosynthesis; iron-sulfur cluster biosynthesis. Functionally, master enzyme that delivers sulfur to a number of partners involved in Fe-S cluster assembly, tRNA modification or cofactor biosynthesis. Catalyzes the removal of elemental sulfur atoms from cysteine to produce alanine. Functions as a sulfur delivery protein for Fe-S cluster synthesis onto IscU, an Fe-S scaffold assembly protein, as well as other S acceptor proteins. The sequence is that of Cysteine desulfurase IscS from Haemophilus influenzae (strain PittGG).